The sequence spans 586 residues: Arginine--tRNA ligase (586 aa).

The short motif at 131–141 is the 'HIGH' region element; the sequence is ANPTGPMHVGH.

Belongs to the class-I aminoacyl-tRNA synthetase family. As to quaternary structure, monomer.

The protein resides in the cytoplasm. It catalyses the reaction tRNA(Arg) + L-arginine + ATP = L-arginyl-tRNA(Arg) + AMP + diphosphate. The polypeptide is Arginine--tRNA ligase (Rhizobium rhizogenes (strain K84 / ATCC BAA-868) (Agrobacterium radiobacter)).